The primary structure comprises 839 residues: Protein translocase subunit SecA (839 aa).

ATP is bound by residues Gln85, Gly103–Thr107, and Asp492. Positions Glu794–Asn820 are disordered. Residues Cys823, Cys825, Cys834, and Cys835 each contribute to the Zn(2+) site.

Belongs to the SecA family. As to quaternary structure, monomer and homodimer. Part of the essential Sec protein translocation apparatus which comprises SecA, SecYEG and auxiliary proteins SecDF. Other proteins may also be involved. Requires Zn(2+) as cofactor.

It localises to the cell membrane. It is found in the cytoplasm. It carries out the reaction ATP + H2O + cellular proteinSide 1 = ADP + phosphate + cellular proteinSide 2.. Its function is as follows. Part of the Sec protein translocase complex. Interacts with the SecYEG preprotein conducting channel. Has a central role in coupling the hydrolysis of ATP to the transfer of proteins into and across the cell membrane, serving as an ATP-driven molecular motor driving the stepwise translocation of polypeptide chains across the membrane. This is Protein translocase subunit SecA from Clostridium acetobutylicum (strain ATCC 824 / DSM 792 / JCM 1419 / IAM 19013 / LMG 5710 / NBRC 13948 / NRRL B-527 / VKM B-1787 / 2291 / W).